The sequence spans 117 residues: Minor capsid protein p17 (117 aa).

An N-linked (GlcNAc...) asparagine; by host glycan is attached at asparagine 12. Residues 39–59 form a helical membrane-spanning segment; the sequence is AIILGILILLVIILIIVAIVY. Residues asparagine 61 and asparagine 97 are each glycosylated (N-linked (GlcNAc...) asparagine; by host).

This sequence belongs to the asfivirus minor capsid protein p17 family. As to quaternary structure, interacts with the minor capsid protein M1249L and with the hexon capsid protein p72 capsomers; these interactions form a rigid zipper structure that stabilizes the capsomers. Interacts with host STING1.

It localises to the virion membrane. It is found in the host endoplasmic reticulum membrane. Functionally, together with the penton and the other minor capsid proteins (M1249L, p49), forms a complicated network immediately below the outer capsid shell, stabilizing the whole capsid. Three copies of p17 encircle each p72 capsomer in the inner capsid shell, anchoring p72 capsomers on the inner membrane. Required for the assembly of the capsid and icosahedral morphogenesis. Additionally, inhibits the host cGAS-STING pathway through its interaction with STING1 and subsequent interference of the recruitment of downstream components TBK1 and IKBKE. The protein is Minor capsid protein p17 of Ornithodoros (relapsing fever ticks).